A 565-amino-acid chain; its full sequence is MRQSIFFMPTLKETPADAVAKSHQVMLRGGYIRQVTAGVYSYLPLGYKVLRKTEKIIEEEMANAGVVEMIMPHMLPASMWEESGRLPKYGPEMFRLKDRHGREMLLGPTHEETFTDVVAKSLKSYKQMPLQLYQIQTKFRDENRPRFGLLRGREFVMLDGYSFAASQEQLDKQFDDEKAAYLKIFKRTGVEVRPVIADSGTMGGKNSIEFQAPAAVGEDTIATNASGTYAANLEMAVSVDTFKQEPEELKAMEKVATPGCDSIDKLAEFLQVPATRIVKSVLYIVDEKKKVLVLIRADKEVNEVKLTHLLDCDSLRVAETSDLEELTGAGKGGVGPVNADWADEIVADKTVKGLYNVVVGAGESDAQFINANLDRDFKADRFADLRVANEGEPDPVDHEPLKFTTSIEVGHIFKLGTYYTETMGAKFLDQNGKSQPVIMGSYGIGVTRLLSAVVEQHATENGVAWPKEIAPFGIHIIQMKMKDEIQSKLAEDLEAKFAKYDVLYDDRNERPGVKFNDADLVGAPIRITVGRDAADGIVEVKRPGDDQAQKLAVADLEDFIANELD.

This sequence belongs to the class-II aminoacyl-tRNA synthetase family. ProS type 1 subfamily. Homodimer.

It localises to the cytoplasm. It catalyses the reaction tRNA(Pro) + L-proline + ATP = L-prolyl-tRNA(Pro) + AMP + diphosphate. Its function is as follows. Catalyzes the attachment of proline to tRNA(Pro) in a two-step reaction: proline is first activated by ATP to form Pro-AMP and then transferred to the acceptor end of tRNA(Pro). As ProRS can inadvertently accommodate and process non-cognate amino acids such as alanine and cysteine, to avoid such errors it has two additional distinct editing activities against alanine. One activity is designated as 'pretransfer' editing and involves the tRNA(Pro)-independent hydrolysis of activated Ala-AMP. The other activity is designated 'posttransfer' editing and involves deacylation of mischarged Ala-tRNA(Pro). The misacylated Cys-tRNA(Pro) is not edited by ProRS. The chain is Proline--tRNA ligase from Lactobacillus delbrueckii subsp. bulgaricus (strain ATCC BAA-365 / Lb-18).